The chain runs to 195 residues: Interferon tau-1 (195 aa).

Residues 1–23 (MAFVLSLLMALVLVSYGPGGSLG) form the signal peptide. 2 disulfides stabilise this stretch: Cys24–Cys122 and Cys52–Cys162.

It belongs to the alpha/beta interferon family. IFN-alphaII subfamily. As to expression, constitutively and exclusively expressed in the mononuclear cells of the extraembryonic trophectoderm.

The protein localises to the secreted. In terms of biological role, paracrine hormone primarily responsible for maternal recognition of pregnancy. Interacts with endometrial receptors, probably type I interferon receptors, and blocks estrogen receptor expression, preventing the estrogen-induced increase in oxytocin receptor expression in the endometrium. This results in the suppression of the pulsatile endometrial release of the luteolytic hormone prostaglandin F2-alpha, hindering the regression of the corpus luteum (luteolysis) and therefore a return to ovarian cyclicity. This, and a possible direct effect of IFN-tau on prostaglandin synthesis, leads in turn to continued ovarian progesterone secretion, which stimulates the secretion by the endometrium of the nutrients required for the growth of the conceptus. In summary, displays particularly high antiviral and antiproliferative potency concurrently with particular weak cytotoxicity, high antiluteolytic activity and immunomodulatory properties. In contrast with other IFNs, IFN-tau is not virally inducible. The polypeptide is Interferon tau-1 (IFNT1) (Ovis aries (Sheep)).